Here is a 316-residue protein sequence, read N- to C-terminus: tRNA methyltransferase 10 homolog B (316 aa).

2 disordered regions span residues 1 to 30 and 42 to 98; these read MDCE…RDDG and VEYD…DLGN. Positions 63 to 82 are enriched in basic residues; sequence VQRKQRHWERIVSSKKSKRK. The stretch at 75–96 forms a coiled coil; sequence SSKKSKRKQERERRKIKRAEDL. The segment covering 83 to 95 has biased composition (basic and acidic residues); it reads QERERRKIKRAED. The region spanning 113–310 is the SAM-dependent MTase TRM10-type domain; the sequence is TKEKLLEAKH…KGVSPGKGYI (198 aa).

It belongs to the class IV-like SAM-binding methyltransferase superfamily. TRM10 family.

It carries out the reaction guanosine(9) in tRNA + S-adenosyl-L-methionine = N(1)-methylguanosine(9) in tRNA + S-adenosyl-L-homocysteine + H(+). S-adenosyl-L-methionine-dependent guanine N(1)-methyltransferase that catalyzes the formation of N(1)-methylguanine at position 9 (m1G9) in tRNAs. Probably not able to catalyze formation of N(1)-methyladenine at position 9 (m1A9) in tRNAs. This is tRNA methyltransferase 10 homolog B (Trmt10b) from Rattus norvegicus (Rat).